The primary structure comprises 266 residues: Thymidylate synthase (266 aa).

Arginine 24 contacts dUMP. Residue histidine 54 coordinates (6R)-5,10-methylene-5,6,7,8-tetrahydrofolate. 129–130 provides a ligand contact to dUMP; that stretch reads RR. Cysteine 149 (nucleophile) is an active-site residue. DUMP is bound by residues 169–172, asparagine 180, and 210–212; these read RSAD and HIY. Aspartate 172 contacts (6R)-5,10-methylene-5,6,7,8-tetrahydrofolate. Residue alanine 265 coordinates (6R)-5,10-methylene-5,6,7,8-tetrahydrofolate.

Belongs to the thymidylate synthase family. Bacterial-type ThyA subfamily. Homodimer.

It is found in the cytoplasm. The enzyme catalyses dUMP + (6R)-5,10-methylene-5,6,7,8-tetrahydrofolate = 7,8-dihydrofolate + dTMP. It functions in the pathway pyrimidine metabolism; dTTP biosynthesis. Functionally, catalyzes the reductive methylation of 2'-deoxyuridine-5'-monophosphate (dUMP) to 2'-deoxythymidine-5'-monophosphate (dTMP) while utilizing 5,10-methylenetetrahydrofolate (mTHF) as the methyl donor and reductant in the reaction, yielding dihydrofolate (DHF) as a by-product. This enzymatic reaction provides an intracellular de novo source of dTMP, an essential precursor for DNA biosynthesis. In Mycolicibacterium paratuberculosis (strain ATCC BAA-968 / K-10) (Mycobacterium paratuberculosis), this protein is Thymidylate synthase.